The following is a 322-amino-acid chain: Methionyl-tRNA formyltransferase (322 aa).

Position 115–118 (115–118) interacts with (6S)-5,6,7,8-tetrahydrofolate; sequence SLLP.

The protein belongs to the Fmt family.

It carries out the reaction L-methionyl-tRNA(fMet) + (6R)-10-formyltetrahydrofolate = N-formyl-L-methionyl-tRNA(fMet) + (6S)-5,6,7,8-tetrahydrofolate + H(+). Functionally, attaches a formyl group to the free amino group of methionyl-tRNA(fMet). The formyl group appears to play a dual role in the initiator identity of N-formylmethionyl-tRNA by promoting its recognition by IF2 and preventing the misappropriation of this tRNA by the elongation apparatus. The chain is Methionyl-tRNA formyltransferase from Treponema denticola (strain ATCC 35405 / DSM 14222 / CIP 103919 / JCM 8153 / KCTC 15104).